The sequence spans 633 residues: Probable potassium transport system protein Kup (633 aa).

12 consecutive transmembrane segments (helical) span residues 21–41 (LAVG…LYAF), 61–81 (LVSL…VLFL), 107–127 (TAVL…DAMI), 145–165 (PTLS…LFAI), 176–196 (FFGP…IMHI), 219–239 (GFLG…AEAL), 255–275 (WFVL…ALVL), 293–313 (ALLP…QAVI), 345–365 (IFLP…VLSF), 371–391 (LATA…IMAF), 402–422 (LPMA…FLGA), and 427–447 (IHDG…IMWT).

The protein belongs to the HAK/KUP transporter (TC 2.A.72) family.

It is found in the cell inner membrane. It carries out the reaction K(+)(in) + H(+)(in) = K(+)(out) + H(+)(out). In terms of biological role, transport of potassium into the cell. Likely operates as a K(+):H(+) symporter. This chain is Probable potassium transport system protein Kup, found in Rhizobium rhizogenes (strain K84 / ATCC BAA-868) (Agrobacterium radiobacter).